We begin with the raw amino-acid sequence, 203 residues long: Probable cytochrome c oxidase subunit 3 (203 aa).

5 helical membrane passes run 30–50 (IVWL…YFTA), 70–90 (AVPV…GVFA), 102–122 (WYVI…YEYY), 142–162 (LATG…IFLL), and 179–199 (IVVS…FTVI).

The protein belongs to the cytochrome c oxidase subunit 3 family.

It localises to the cell membrane. The catalysed reaction is 4 Fe(II)-[cytochrome c] + O2 + 8 H(+)(in) = 4 Fe(III)-[cytochrome c] + 2 H2O + 4 H(+)(out). The polypeptide is Probable cytochrome c oxidase subunit 3 (ctaE) (Mycolicibacterium paratuberculosis (strain ATCC BAA-968 / K-10) (Mycobacterium paratuberculosis)).